Here is a 356-residue protein sequence, read N- to C-terminus: tRNA N6-adenosine threonylcarbamoyltransferase (356 aa).

Residues His-110 and His-114 each contribute to the Fe cation site. Residues Leu-132–Gly-136, Asp-165, Gly-178, Asp-182, and Asn-288 each bind substrate. Asp-316 contributes to the Fe cation binding site.

It belongs to the KAE1 / TsaD family. Fe(2+) serves as cofactor.

Its subcellular location is the cytoplasm. It catalyses the reaction L-threonylcarbamoyladenylate + adenosine(37) in tRNA = N(6)-L-threonylcarbamoyladenosine(37) in tRNA + AMP + H(+). Required for the formation of a threonylcarbamoyl group on adenosine at position 37 (t(6)A37) in tRNAs that read codons beginning with adenine. Is involved in the transfer of the threonylcarbamoyl moiety of threonylcarbamoyl-AMP (TC-AMP) to the N6 group of A37, together with TsaE and TsaB. TsaD likely plays a direct catalytic role in this reaction. The sequence is that of tRNA N6-adenosine threonylcarbamoyltransferase from Maridesulfovibrio salexigens (strain ATCC 14822 / DSM 2638 / NCIMB 8403 / VKM B-1763) (Desulfovibrio salexigens).